A 260-amino-acid polypeptide reads, in one-letter code: Flap endonuclease Xni (260 aa).

Residue aspartate 109 coordinates Mg(2+). Positions 165-259 (VKPSQLADYW…DIRFTGPNKA (95 aa)) constitute a 5'-3' exonuclease domain. 4 residues coordinate K(+): leucine 176, proline 185, valine 187, and isoleucine 190. Residues 189–194 (GIGPKA) are interaction with DNA.

The protein belongs to the Xni family. Mg(2+) is required as a cofactor. The cofactor is K(+).

Has flap endonuclease activity. During DNA replication, flap endonucleases cleave the 5'-overhanging flap structure that is generated by displacement synthesis when DNA polymerase encounters the 5'-end of a downstream Okazaki fragment. This chain is Flap endonuclease Xni, found in Vibrio parahaemolyticus serotype O3:K6 (strain RIMD 2210633).